A 151-amino-acid polypeptide reads, in one-letter code: Deoxyuridine 5'-triphosphate nucleotidohydrolase (151 aa).

Substrate contacts are provided by residues 70–72, Asn-83, 87–89, and Met-97; these read RSG and LID.

Belongs to the dUTPase family. Requires Mg(2+) as cofactor.

The enzyme catalyses dUTP + H2O = dUMP + diphosphate + H(+). It functions in the pathway pyrimidine metabolism; dUMP biosynthesis; dUMP from dCTP (dUTP route): step 2/2. Its function is as follows. This enzyme is involved in nucleotide metabolism: it produces dUMP, the immediate precursor of thymidine nucleotides and it decreases the intracellular concentration of dUTP so that uracil cannot be incorporated into DNA. The protein is Deoxyuridine 5'-triphosphate nucleotidohydrolase of Pasteurella multocida (strain Pm70).